Reading from the N-terminus, the 500-residue chain is Glycerol kinase (500 aa).

Threonine 11 serves as a coordination point for ADP. ATP contacts are provided by threonine 11, threonine 12, and serine 13. Residue threonine 11 coordinates sn-glycerol 3-phosphate. Arginine 15 lines the ADP pocket. Sn-glycerol 3-phosphate contacts are provided by arginine 81, glutamate 82, tyrosine 133, and aspartate 242. Residues arginine 81, glutamate 82, tyrosine 133, aspartate 242, and glutamine 243 each coordinate glycerol. 2 residues coordinate ADP: threonine 264 and glycine 307. Residues threonine 264, glycine 307, glutamine 311, and glycine 411 each contribute to the ATP site. Glycine 411 contacts ADP.

The protein belongs to the FGGY kinase family.

It carries out the reaction glycerol + ATP = sn-glycerol 3-phosphate + ADP + H(+). The protein operates within polyol metabolism; glycerol degradation via glycerol kinase pathway; sn-glycerol 3-phosphate from glycerol: step 1/1. Its activity is regulated as follows. Inhibited by fructose 1,6-bisphosphate (FBP). Key enzyme in the regulation of glycerol uptake and metabolism. Catalyzes the phosphorylation of glycerol to yield sn-glycerol 3-phosphate. The sequence is that of Glycerol kinase from Bradyrhizobium sp. (strain ORS 278).